Reading from the N-terminus, the 263-residue chain is Type III pantothenate kinase (263 aa).

9–16 lines the ATP pocket; that stretch reads DIGNTSIK. Substrate-binding positions include Tyr-103 and 110–113; that span reads GADR. The Proton acceptor role is filled by Asp-112. Residue Asp-134 participates in K(+) binding. An ATP-binding site is contributed by Thr-137. Thr-190 serves as a coordination point for substrate.

It belongs to the type III pantothenate kinase family. Homodimer. NH4(+) is required as a cofactor. K(+) serves as cofactor.

The protein localises to the cytoplasm. It carries out the reaction (R)-pantothenate + ATP = (R)-4'-phosphopantothenate + ADP + H(+). The protein operates within cofactor biosynthesis; coenzyme A biosynthesis; CoA from (R)-pantothenate: step 1/5. Functionally, catalyzes the phosphorylation of pantothenate (Pan), the first step in CoA biosynthesis. This chain is Type III pantothenate kinase, found in Desulfovibrio desulfuricans (strain ATCC 27774 / DSM 6949 / MB).